The sequence spans 312 residues: Ribonuclease Z (312 aa).

The Zn(2+) site is built by histidine 62, histidine 64, aspartate 66, histidine 67, histidine 144, aspartate 215, and histidine 273. The active-site Proton acceptor is the aspartate 66.

It belongs to the RNase Z family. Homodimer. Zn(2+) is required as a cofactor.

The catalysed reaction is Endonucleolytic cleavage of RNA, removing extra 3' nucleotides from tRNA precursor, generating 3' termini of tRNAs. A 3'-hydroxy group is left at the tRNA terminus and a 5'-phosphoryl group is left at the trailer molecule.. Its function is as follows. Zinc phosphodiesterase, which displays some tRNA 3'-processing endonuclease activity. Probably involved in tRNA maturation, by removing a 3'-trailer from precursor tRNA. In Prochlorococcus marinus (strain MIT 9515), this protein is Ribonuclease Z.